Here is a 35-residue protein sequence, read N- to C-terminus: Cycloamanide F proprotein (35 aa).

The propeptide occupies Met1–Pro10. Positions Ile11–Pro18 form a cross-link, cyclopeptide (Ile-Pro). The propeptide occupies Cys19 to Cys35.

The protein belongs to the MSDIN fungal toxin family. Post-translationally, processed by the macrocyclase-peptidase enzyme POPB to yield a cyclic decapeptide. POPB first removes 10 residues from the N-terminus. Conformational trapping of the remaining peptide forces the enzyme to release this intermediate rather than proceed to macrocyclization. The enzyme rebinds the remaining peptide in a different conformation and catalyzes macrocyclization of the N-terminal 8 residues.

In terms of biological role, cyclic octapeptide that belongs to the MSDIN-like toxin family responsible for a large number of food poisoning cases and deaths. Cycloaminide E is structurally related to other cycloamanides that are non-toxic to mammals but show immunosuppressive activity. This Amanita phalloides (Death cap) protein is Cycloamanide F proprotein.